A 735-amino-acid polypeptide reads, in one-letter code: Ribosomal protein S6 kinase alpha-1 (735 aa).

At Ser54 the chain carries Phosphoserine. In terms of domain architecture, Protein kinase 1 spans 62–321; it reads FELLKVLGQG…AEEIKRHIFY (260 aa). ATP contacts are provided by residues 68–76 and Lys94; that span reads LGQGSFGKV. Asp187 functions as the Proton acceptor in the catalytic mechanism. Ser221 carries the phosphoserine; by PDPK1 modification. Position 307 is a phosphoserine (Ser307). Residues 322-391 form the AGC-kinase C-terminal domain; the sequence is STIDWNKLYR…VATGLMEDDS (70 aa). A Phosphothreonine modification is found at Thr359. Position 363 is a phosphoserine (Ser363). Ser369 and Ser380 each carry phosphoserine; by autocatalysis. Residues 418 to 675 enclose the Protein kinase 2 domain; the sequence is YIVKETIGVG…AKQVLQHPWI (258 aa). ATP contacts are provided by residues 424 to 432 and Lys447; that span reads IGVGSYSVC. Asp535 serves as the catalytic Proton acceptor. Thr573 carries the phosphothreonine modification. Residue Ser732 is modified to Phosphoserine.

It belongs to the protein kinase superfamily. AGC Ser/Thr protein kinase family. S6 kinase subfamily. As to quaternary structure, forms a complex with either MAPK1/ERK2 or MAPK3/ERK1 in quiescent cells. Transiently dissociates following mitogenic stimulation. Interacts with ETV1/ER81 and FGFR1. Mg(2+) is required as a cofactor. Activated by phosphorylation at Ser-221 by PDPK1. Autophosphorylated on Ser-380, as part of the activation process. May be phosphorylated at Thr-359 and Ser-363 by MAPK1/ERK2 and MAPK3/ERK1. Post-translationally, N-terminal myristoylation results in an activated kinase in the absence of added growth factors.

It is found in the nucleus. The protein localises to the cytoplasm. It carries out the reaction L-seryl-[protein] + ATP = O-phospho-L-seryl-[protein] + ADP + H(+). The catalysed reaction is L-threonyl-[protein] + ATP = O-phospho-L-threonyl-[protein] + ADP + H(+). Upon extracellular signal or mitogen stimulation, phosphorylated at Thr-573 in the C-terminal kinase domain (CTKD) by MAPK1/ERK2 and MAPK3/ERK1. The activated CTKD then autophosphorylates Ser-380, allowing binding of PDPK1, which in turn phosphorylates Ser-221 in the N-terminal kinase domain (NTDK) leading to the full activation of the protein and subsequent phosphorylation of the substrates by the NTKD. Serine/threonine-protein kinase that acts downstream of ERK (MAPK1/ERK2 and MAPK3/ERK1) signaling and mediates mitogenic and stress-induced activation of the transcription factors CREB1, ETV1/ER81 and NR4A1/NUR77, regulates translation through RPS6 and EIF4B phosphorylation, and mediates cellular proliferation, survival, and differentiation by modulating mTOR signaling and repressing pro-apoptotic function of BAD and DAPK1. In fibroblast, is required for EGF-stimulated phosphorylation of CREB1, which results in the subsequent transcriptional activation of several immediate-early genes. In response to mitogenic stimulation (EGF and PMA), phosphorylates and activates NR4A1/NUR77 and ETV1/ER81 transcription factors and the cofactor CREBBP. Upon insulin-derived signal, acts indirectly on the transcription regulation of several genes by phosphorylating GSK3B at 'Ser-9' and inhibiting its activity. Phosphorylates RPS6 in response to serum or EGF via an mTOR-independent mechanism and promotes translation initiation by facilitating assembly of the pre-initiation complex. In response to insulin, phosphorylates EIF4B, enhancing EIF4B affinity for the EIF3 complex and stimulating cap-dependent translation. Is involved in the mTOR nutrient-sensing pathway by directly phosphorylating TSC2 at 'Ser-1798', which potently inhibits TSC2 ability to suppress mTOR signaling, and mediates phosphorylation of RPTOR, which regulates mTORC1 activity and may promote rapamycin-sensitive signaling independently of the PI3K/AKT pathway. Also involved in feedback regulation of mTORC1 and mTORC2 by phosphorylating DEPTOR. Mediates cell survival by phosphorylating the pro-apoptotic proteins BAD and DAPK1 and suppressing their pro-apoptotic function. Promotes the survival of hepatic stellate cells by phosphorylating CEBPB in response to the hepatotoxin carbon tetrachloride (CCl4). Mediates induction of hepatocyte prolifration by TGFA through phosphorylation of CEBPB. Is involved in cell cycle regulation by phosphorylating the CDK inhibitor CDKN1B, which promotes CDKN1B association with 14-3-3 proteins and prevents its translocation to the nucleus and inhibition of G1 progression. Phosphorylates EPHA2 at 'Ser-897', the RPS6KA-EPHA2 signaling pathway controls cell migration. In response to mTORC1 activation, phosphorylates EIF4B at 'Ser-406' and 'Ser-422' which stimulates bicarbonate cotransporter SLC4A7 mRNA translation, increasing SLC4A7 protein abundance and function. In Rattus norvegicus (Rat), this protein is Ribosomal protein S6 kinase alpha-1 (Rps6ka1).